Reading from the N-terminus, the 269-residue chain is Hydroxypyruvate/pyruvate aldolase (269 aa).

H47 (proton acceptor) is an active-site residue. E151 and D177 together coordinate a divalent metal cation.

This sequence belongs to the HpcH/HpaI aldolase family. Requires a divalent metal cation as cofactor.

The catalysed reaction is D-glyceraldehyde + 3-hydroxypyruvate = 2-dehydro-D-gluconate. It catalyses the reaction D-glyceraldehyde + 3-hydroxypyruvate = (3R,4S,5R)-3,4,5,6-tetrahydroxy-2-oxohexanoate. The enzyme catalyses D-glyceraldehyde + 3-hydroxypyruvate = 2-dehydro-D-galactonate. It carries out the reaction D-glyceraldehyde + pyruvate = 2-dehydro-3-deoxy-L-galactonate. The catalysed reaction is 2-dehydro-3-deoxy-D-gluconate = D-glyceraldehyde + pyruvate. Functionally, aldolase which can catalyze in vitro the aldolisation reaction between hydroxypyruvate (HPA) or pyruvate (PA) and D-glyceraldehyde (D-GA). The condensation of hydroxypyruvate and D-glyceraldehyde produces 2-dehydro-D-gluconate as the major product, (3R,4S,5R)-3,4,5,6-tetrahydroxy-2-oxohexanoate and 2-dehydro-D-galactonate. The condensation of pyruvate and D-glyceraldehyde produces 2-dehydro-3-deoxy-L-galactonate as the major product and 2-dehydro-3-deoxy-D-gluconate. This is Hydroxypyruvate/pyruvate aldolase from Cupriavidus necator (strain ATCC 17699 / DSM 428 / KCTC 22496 / NCIMB 10442 / H16 / Stanier 337) (Ralstonia eutropha).